The chain runs to 124 residues: Fluoride-specific ion channel FluC (124 aa).

4 consecutive transmembrane segments (helical) span residues 5 to 25 (ILAV…AGTW), 37 to 57 (ATLA…GLFL), 69 to 89 (GLIV…LDTL), and 99 to 119 (LALG…WAGL). Na(+) contacts are provided by Gly-76 and Thr-79.

The protein belongs to the fluoride channel Fluc/FEX (TC 1.A.43) family.

The protein resides in the cell inner membrane. The enzyme catalyses fluoride(in) = fluoride(out). With respect to regulation, na(+) is not transported, but it plays an essential structural role and its presence is essential for fluoride channel function. Its function is as follows. Fluoride-specific ion channel. Important for reducing fluoride concentration in the cell, thus reducing its toxicity. This chain is Fluoride-specific ion channel FluC, found in Pseudomonas syringae pv. tomato (strain ATCC BAA-871 / DC3000).